The following is a 205-amino-acid chain: DNA-directed RNA polymerase RPB5 homolog (205 aa).

The protein belongs to the archaeal RpoH/eukaryotic RPB5 RNA polymerase subunit family. As to quaternary structure, part of the viral DNA-directed RNA polymerase that consists of 8 polII-like subunits (RPB1, RPB2, RPB3, RPB5, RPB6, RPB7, RPB9, RPB10), a capping enzyme and a termination factor.

It is found in the host cytoplasm. The protein localises to the virion. Functionally, component of the DNA-directed RNA polymerase (RNAP) that catalyzes the transcription in the cytoplasm of viral DNA into RNA using the four ribonucleoside triphosphates as substrates. The sequence is that of DNA-directed RNA polymerase RPB5 homolog from Ornithodoros (relapsing fever ticks).